We begin with the raw amino-acid sequence, 350 residues long: D-alanine--D-alanine ligase (350 aa).

Residues 134 to 337 form the ATP-grasp domain; sequence KIFAAQRGVK…LPKKHSIKVS (204 aa). 160 to 212 contacts ATP; that stretch reads IAYPIILKPARLGSSIGVSVINEEKELDYGRDLAFEYDDTIIAESFKSGVKEY. Mg(2+) is bound by residues Asp289, Glu301, and Asn303.

Belongs to the D-alanine--D-alanine ligase family. It depends on Mg(2+) as a cofactor. Mn(2+) is required as a cofactor.

It is found in the cytoplasm. It carries out the reaction 2 D-alanine + ATP = D-alanyl-D-alanine + ADP + phosphate + H(+). Its pathway is cell wall biogenesis; peptidoglycan biosynthesis. Cell wall formation. The polypeptide is D-alanine--D-alanine ligase (Helicobacter hepaticus (strain ATCC 51449 / 3B1)).